A 50-amino-acid polypeptide reads, in one-letter code: Insulin (50 aa).

Disulfide bonds link Cys-7–Cys-36, Cys-19–Cys-49, and Cys-35–Cys-40.

This sequence belongs to the insulin family. In terms of assembly, heterodimer of a B chain and an A chain linked by two disulfide bonds.

Its subcellular location is the secreted. Functionally, insulin decreases blood glucose concentration. It increases cell permeability to monosaccharides, amino acids and fatty acids. It accelerates glycolysis, the pentose phosphate cycle, and glycogen synthesis in liver. This chain is Insulin (ins), found in Katsuwonus pelamis (Skipjack tuna).